We begin with the raw amino-acid sequence, 468 residues long: Tripartite motif-containing protein 75 (468 aa).

The RING-type zinc-finger motif lies at 16–57 (CSICLDYLSDPVTIECGHNFCRSCIQQSWLDLQELFPCPVCR). The B box-type zinc finger occupies 92–133 (EETTLCEKHNQPLSVFCKEDLMVLCPLCTQPPDHQGHHVRPI). Zn(2+) is bound by residues Cys97, His100, Cys119, and His125. Positions 170 to 222 (LELREMVENQRQELSSEFEHLNQFLDREQQAVLSRLAEEEKDNQQKLSANITA) form a coiled coil. The B30.2/SPRY domain occupies 276–468 (CSFPPQYSAL…LRICTGTVCE (193 aa)).

Belongs to the TRIM/RBCC family.

Its subcellular location is the cytoplasm. The protein localises to the cytoskeleton. It localises to the spindle. In terms of biological role, may play a role in female meiosis. The protein is Tripartite motif-containing protein 75 of Homo sapiens (Human).